The primary structure comprises 90 residues: Acylphosphatase (90 aa).

In terms of domain architecture, Acylphosphatase-like spans 4-90; sequence TVHLRITGHV…KGQYKDFRIY (87 aa). Catalysis depends on residues Arg19 and Asn37.

The protein belongs to the acylphosphatase family.

It carries out the reaction an acyl phosphate + H2O = a carboxylate + phosphate + H(+). The protein is Acylphosphatase (acyP) of Caldanaerobacter subterraneus subsp. tengcongensis (strain DSM 15242 / JCM 11007 / NBRC 100824 / MB4) (Thermoanaerobacter tengcongensis).